The following is a 206-amino-acid chain: Large ribosomal subunit protein uL4 (206 aa).

A disordered region spans residues 46 to 77; sequence GTRAQKDREQVRHSTKKPFKQKGTGRARAGMT. Over residues 58 to 70 the composition is skewed to basic residues; the sequence is HSTKKPFKQKGTG.

It belongs to the universal ribosomal protein uL4 family. As to quaternary structure, part of the 50S ribosomal subunit.

One of the primary rRNA binding proteins, this protein initially binds near the 5'-end of the 23S rRNA. It is important during the early stages of 50S assembly. It makes multiple contacts with different domains of the 23S rRNA in the assembled 50S subunit and ribosome. In terms of biological role, forms part of the polypeptide exit tunnel. The protein is Large ribosomal subunit protein uL4 of Polaromonas sp. (strain JS666 / ATCC BAA-500).